The primary structure comprises 309 residues: Taste receptor type 2 member 46 (309 aa).

Position 1 (Met-1) is a topological domain, extracellular. A helical membrane pass occupies residues 2–22; sequence ITFLPIIFSILIVVTFVIGNF. Topologically, residues 23–46 are cytoplasmic; it reads ANGFIALANSIEWFKRQKISFADQ. A helical membrane pass occupies residues 47 to 67; the sequence is ILTALAVSRVGLLWVLLLNWY. Topologically, residues 68–86 are extracellular; sequence ATELNPAFYSIEVRITAYN. A helical membrane pass occupies residues 87–107; it reads LWAVINHFSNWLATSLSIFYL. At 108-126 the chain is on the cytoplasmic side; that stretch reads LKIANFSNLIFLRLKRRVK. Residues 127–147 traverse the membrane as a helical segment; it reads SVVLVILLGPLLFLVCHLFVI. The Extracellular segment spans residues 148–178; the sequence is NMNQIIWTKEYEGNMTWKIKLRSAMYLSNIT. Asn-161 and Asn-176 each carry an N-linked (GlcNAc...) asparagine glycan. The helical transmembrane segment at 179 to 199 threads the bilayer; that stretch reads VTILANLVPFTLTLISFLLLI. Residues 200–229 lie on the Cytoplasmic side of the membrane; the sequence is CSLCKHLKKMQLHGKGSQDPSMKVHIKALQ. Residues 230–250 form a helical membrane-spanning segment; it reads TVTSFLLLCAIYFLSIIMSVW. The Extracellular portion of the chain corresponds to 251 to 259; the sequence is SFESLENKP. A helical transmembrane segment spans residues 260-280; that stretch reads VFMFCEAITFSYPSTHPFILI. Residues 281-309 are Cytoplasmic-facing; sequence WGNKKLKQTFLSVLWHVRYWVKGEEPSSP.

Belongs to the G-protein coupled receptor T2R family.

It localises to the membrane. Its subcellular location is the cell projection. The protein localises to the cilium membrane. Functionally, receptor that may play a role in the perception of bitterness and is gustducin-linked. May play a role in sensing the chemical composition of the gastrointestinal content. The activity of this receptor may stimulate alpha gustducin, mediate PLC-beta-2 activation and lead to the gating of TRPM5. In airway epithelial cells, binding of bitter compounds increases the intracellular calcium ion concentration and stimulates ciliary beat frequency. The sequence is that of Taste receptor type 2 member 46 (TAS2R46) from Pan paniscus (Pygmy chimpanzee).